A 264-amino-acid polypeptide reads, in one-letter code: Thiazole synthase (264 aa).

Lys106 functions as the Schiff-base intermediate with DXP in the catalytic mechanism. Residues Gly167, 193 to 194 (AG), and 215 to 216 (NT) contribute to the 1-deoxy-D-xylulose 5-phosphate site.

The protein belongs to the ThiG family. In terms of assembly, homotetramer. Forms heterodimers with either ThiH or ThiS.

It localises to the cytoplasm. It carries out the reaction [ThiS sulfur-carrier protein]-C-terminal-Gly-aminoethanethioate + 2-iminoacetate + 1-deoxy-D-xylulose 5-phosphate = [ThiS sulfur-carrier protein]-C-terminal Gly-Gly + 2-[(2R,5Z)-2-carboxy-4-methylthiazol-5(2H)-ylidene]ethyl phosphate + 2 H2O + H(+). It functions in the pathway cofactor biosynthesis; thiamine diphosphate biosynthesis. Its function is as follows. Catalyzes the rearrangement of 1-deoxy-D-xylulose 5-phosphate (DXP) to produce the thiazole phosphate moiety of thiamine. Sulfur is provided by the thiocarboxylate moiety of the carrier protein ThiS. In vitro, sulfur can be provided by H(2)S. This chain is Thiazole synthase, found in Thioalkalivibrio sulfidiphilus (strain HL-EbGR7).